Here is a 176-residue protein sequence, read N- to C-terminus: NAD(P)H-quinone oxidoreductase subunit 6, chloroplastic (176 aa).

5 helical membrane-spanning segments follow: residues 10 to 30 (FLLV…VLFT), 33 to 53 (IFSA…YILA), 63 to 83 (LLIY…FMSG), 105 to 125 (ISLF…GIIW), and 152 to 172 (FFLP…GAIA).

This sequence belongs to the complex I subunit 6 family. NDH is composed of at least 16 different subunits, 5 of which are encoded in the nucleus.

The protein localises to the plastid. Its subcellular location is the chloroplast thylakoid membrane. It carries out the reaction a plastoquinone + NADH + (n+1) H(+)(in) = a plastoquinol + NAD(+) + n H(+)(out). The enzyme catalyses a plastoquinone + NADPH + (n+1) H(+)(in) = a plastoquinol + NADP(+) + n H(+)(out). In terms of biological role, NDH shuttles electrons from NAD(P)H:plastoquinone, via FMN and iron-sulfur (Fe-S) centers, to quinones in the photosynthetic chain and possibly in a chloroplast respiratory chain. The immediate electron acceptor for the enzyme in this species is believed to be plastoquinone. Couples the redox reaction to proton translocation, and thus conserves the redox energy in a proton gradient. The protein is NAD(P)H-quinone oxidoreductase subunit 6, chloroplastic (ndhG) of Spinacia oleracea (Spinach).